The chain runs to 456 residues: Exodeoxyribonuclease 7 large subunit (456 aa).

This sequence belongs to the XseA family. As to quaternary structure, heterooligomer composed of large and small subunits.

It is found in the cytoplasm. The catalysed reaction is Exonucleolytic cleavage in either 5'- to 3'- or 3'- to 5'-direction to yield nucleoside 5'-phosphates.. Bidirectionally degrades single-stranded DNA into large acid-insoluble oligonucleotides, which are then degraded further into small acid-soluble oligonucleotides. This chain is Exodeoxyribonuclease 7 large subunit, found in Lactobacillus delbrueckii subsp. bulgaricus (strain ATCC BAA-365 / Lb-18).